The following is a 995-amino-acid chain: DExH-box ATP-dependent RNA helicase DExH10 (995 aa).

Residues 1-42 form a disordered region; the sequence is MSAQMEEPETLGKRKESESSKLRSDETPTPEPRTKRRSLKRA. N-acetylserine is present on Ser-2. The segment covering 10–26 has biased composition (basic and acidic residues); that stretch reads TLGKRKESESSKLRSDE. The Helicase ATP-binding domain maps to 90–246; that stretch reads VACLERKESI…WICYLHKQPC (157 aa). 103–110 contributes to the ATP binding site; the sequence is AHTSAGKT. A DEIH box motif is present at residues 194–197; the sequence is DEIH. Positions 290–318 are disordered; sequence DTFPKPKSNDGKKSANGKSGGRGAKGGGG. The span at 307–318 shows a compositional bias: gly residues; that stretch reads KSGGRGAKGGGG. Residues 323 to 524 form the Helicase C-terminal domain; the sequence is DVYKIVKMIM…LSYYTILNLL (202 aa).

Belongs to the DExH box helicase family. SKI2 subfamily. In terms of tissue distribution, expressed in inflorescences, leaves, stems, and roots.

The protein localises to the nucleus. It is found in the nucleoplasm. It carries out the reaction ATP + H2O = ADP + phosphate + H(+). Functionally, ATP-dependent RNA helicase that associates with the RNA exosome complex, with the cap binding complex (CBC) and with the NEXT-like complex. Involved in the degradation of a large number of non-coding nuclear exosome substrates such as snoRNA and miRNA precursors, incompletely spliced mRNAs, and spurious transcripts produced from pseudogenes and intergenic regions. Involved in the maintenance of homeotic B and C gene expression in the reproductive whorls. Regulates floral organ spacing and identity, probably through the regulation of protein synthesis or mRNA degradation. This is DExH-box ATP-dependent RNA helicase DExH10 from Arabidopsis thaliana (Mouse-ear cress).